The sequence spans 278 residues: Orotidine 5'-phosphate decarboxylase (278 aa).

Substrate contacts are provided by residues Asp-40, 62-64 (KTH), 93-102 (DRKFIDIGNT), Tyr-228, and Arg-246. Lys-95 functions as the Proton donor in the catalytic mechanism.

Belongs to the OMP decarboxylase family.

It catalyses the reaction orotidine 5'-phosphate + H(+) = UMP + CO2. Its pathway is pyrimidine metabolism; UMP biosynthesis via de novo pathway; UMP from orotate: step 2/2. The sequence is that of Orotidine 5'-phosphate decarboxylase (PYR1) from Passalora fulva (Tomato leaf mold).